The chain runs to 213 residues: LexA repressor (213 aa).

Positions 31 to 51 (RAEISRELGFRSPNAAEEYLK) form a DNA-binding region, H-T-H motif. Residues serine 129 and lysine 166 each act as for autocatalytic cleavage activity in the active site.

It belongs to the peptidase S24 family. As to quaternary structure, homodimer.

The catalysed reaction is Hydrolysis of Ala-|-Gly bond in repressor LexA.. In terms of biological role, represses a number of genes involved in the response to DNA damage (SOS response), including recA and lexA. In the presence of single-stranded DNA, RecA interacts with LexA causing an autocatalytic cleavage which disrupts the DNA-binding part of LexA, leading to derepression of the SOS regulon and eventually DNA repair. The chain is LexA repressor from Mannheimia succiniciproducens (strain KCTC 0769BP / MBEL55E).